A 775-amino-acid polypeptide reads, in one-letter code: Dipeptidyl peptidase 4 (775 aa).

The signal sequence occupies residues 1–15 (MKFLSLLLLVGVAQA). 3 N-linked (GlcNAc...) asparagine glycosylation sites follow: Asn-81, Asn-111, and Asn-219. Catalysis depends on charge relay system residues Ser-613, Asp-690, and His-725. N-linked (GlcNAc...) asparagine glycosylation is present at Asn-731.

The protein belongs to the peptidase S9B family.

It is found in the secreted. It carries out the reaction Release of an N-terminal dipeptide, Xaa-Yaa-|-Zaa-, from a polypeptide, preferentially when Yaa is Pro, provided Zaa is neither Pro nor hydroxyproline.. Its function is as follows. Extracellular dipeptidyl-peptidase which removes N-terminal dipeptides sequentially from polypeptides having unsubstituted N-termini provided that the penultimate residue is proline. Contributes to pathogenicity. The chain is Dipeptidyl peptidase 4 (DPP4) from Arthroderma otae (strain ATCC MYA-4605 / CBS 113480) (Microsporum canis).